Here is a 163-residue protein sequence, read N- to C-terminus: MALTNAQILAVIDSWEETVGQFPVITHHVPLGGGLQGTLHCYEIPLAAPYGVGFAKNGPTRWQYKRTINQVVHRWGSHTVPFLLEPDNINGKTCTASHLCHNTRCHNPLHLCWESLDDNKGRNWCPGPNGGCVHAVVCLRQGPLYGPGATVAGPQQRGSHFVV.

In terms of assembly, homodimer. It depends on Zn(2+) as a cofactor.

Its function is as follows. Mediates the homing of a group I intron in the ribosomal DNA. Makes a four-base staggered cut in its ribosomal DNA target sequence. The polypeptide is Intron-encoded endonuclease I-PpoI (Physarum polycephalum (Slime mold)).